We begin with the raw amino-acid sequence, 275 residues long: MAIHLYKTSTPSTRNGAVDSQVKSNTRNNLIYGQHRCSKGRNARGIITARHRGGGHKRLYRKIDFRRNEKYIYGRIVTIEYDPNRNAYICLIHYGDGEKRYILHPRGAIIGDTIISGTEVPIKMGNALPLSTDMPLGTAIHNIEITLGRGGQLARAAGAVAKLIAKEGKSATLKLPSGEVRLISKNCSATVGQVGNAGVNQKSLGRAGSKCWLGKRPVVRGVVMNPVDHPHGGGEGRAPIGRKKPATPWGYPALGRRSRKRNKYSDNLILRRRSK.

Disordered stretches follow at residues 1–20 and 225–275; these read MAIHLYKTSTPSTRNGAVDS and NPVD…RRSK.

Belongs to the universal ribosomal protein uL2 family. Part of the 50S ribosomal subunit.

The protein localises to the plastid. The protein resides in the chloroplast. This chain is Large ribosomal subunit protein uL2cz (rpl2-A), found in Populus alba (White poplar).